Reading from the N-terminus, the 208-residue chain is High frequency lysogenization protein HflD homolog (208 aa).

The protein belongs to the HflD family.

It localises to the cytoplasm. Its subcellular location is the cell inner membrane. This is High frequency lysogenization protein HflD homolog from Pseudomonas entomophila (strain L48).